We begin with the raw amino-acid sequence, 168 residues long: Cyclin-dependent kinase 4 inhibitor C (168 aa).

ANK repeat units follow at residues 4–33 (PWGNELASAAARGDLEQLTSLLQNNVNVNA), 37–65 (FGRTALQVMKLGNPEIARRLLLRGANPDL), 69–98 (TGFAVIHDAARAGFLDTLQTLLEFQADVNI), and 102–132 (EGNLPLHLAAKEGHLRVVEFLVKHTASNVGH).

The protein belongs to the CDKN2 cyclin-dependent kinase inhibitor family. As to quaternary structure, heterodimer of p18 with CDK6. Highest levels found in skeletal muscle. Also found in pancreas and heart.

Functionally, interacts strongly with CDK6, weakly with CDK4. Inhibits cell growth and proliferation with a correlated dependence on endogenous retinoblastoma protein RB. The chain is Cyclin-dependent kinase 4 inhibitor C (CDKN2C) from Homo sapiens (Human).